The following is a 686-amino-acid chain: Methionine--tRNA ligase (686 aa).

The short motif at 15 to 25 is the 'HIGH' region element; it reads PYTNGPIHIGH. Residues Cys-147, Cys-150, Cys-160, and Cys-163 each coordinate Zn(2+). Residues 336-340 carry the 'KMSKS' region motif; sequence KLSTS. An ATP-binding site is contributed by Thr-339. Residues 584–686 form the tRNA-binding domain; that stretch reads DFAKMDLRVG…AGVGNGEGIN (103 aa).

The protein belongs to the class-I aminoacyl-tRNA synthetase family. MetG type 1 subfamily. As to quaternary structure, homodimer. It depends on Zn(2+) as a cofactor.

It localises to the cytoplasm. It catalyses the reaction tRNA(Met) + L-methionine + ATP = L-methionyl-tRNA(Met) + AMP + diphosphate. Is required not only for elongation of protein synthesis but also for the initiation of all mRNA translation through initiator tRNA(fMet) aminoacylation. The protein is Methionine--tRNA ligase of Flavobacterium psychrophilum (strain ATCC 49511 / DSM 21280 / CIP 103535 / JIP02/86).